We begin with the raw amino-acid sequence, 437 residues long: Phosphomethylpyrimidine synthase (437 aa).

Residues asparagine 69, methionine 98, tyrosine 127, histidine 163, 185–187, 226–229, and glutamate 265 each bind substrate; these read SRG and DACR. Zn(2+) is bound at residue histidine 269. Tyrosine 292 is a binding site for substrate. Histidine 333 contributes to the Zn(2+) binding site. The [4Fe-4S] cluster site is built by cysteine 409, cysteine 412, and cysteine 416.

It belongs to the ThiC family. The cofactor is [4Fe-4S] cluster.

It catalyses the reaction 5-amino-1-(5-phospho-beta-D-ribosyl)imidazole + S-adenosyl-L-methionine = 4-amino-2-methyl-5-(phosphooxymethyl)pyrimidine + CO + 5'-deoxyadenosine + formate + L-methionine + 3 H(+). It functions in the pathway cofactor biosynthesis; thiamine diphosphate biosynthesis. Functionally, catalyzes the synthesis of the hydroxymethylpyrimidine phosphate (HMP-P) moiety of thiamine from aminoimidazole ribotide (AIR) in a radical S-adenosyl-L-methionine (SAM)-dependent reaction. This Clostridium kluyveri (strain NBRC 12016) protein is Phosphomethylpyrimidine synthase.